We begin with the raw amino-acid sequence, 302 residues long: Homoserine O-acetyltransferase 1 (302 aa).

C142 functions as the Acyl-thioester intermediate in the catalytic mechanism. Residues K163 and S192 each coordinate substrate. Residue H235 is the Proton acceptor of the active site. E237 is a catalytic residue. Residue R249 participates in substrate binding.

It belongs to the MetA family.

It is found in the cytoplasm. The catalysed reaction is L-homoserine + acetyl-CoA = O-acetyl-L-homoserine + CoA. It functions in the pathway amino-acid biosynthesis; L-methionine biosynthesis via de novo pathway; O-acetyl-L-homoserine from L-homoserine: step 1/1. Transfers an acetyl group from acetyl-CoA to L-homoserine, forming acetyl-L-homoserine. The chain is Homoserine O-acetyltransferase 1 from Ilyobacter polytropus (strain ATCC 51220 / DSM 2926 / LMG 16218 / CuHBu1).